A 98-amino-acid chain; its full sequence is Thrombin-like enzyme cerastotin (98 aa).

The 98-residue stretch at 1 to 98 (VIGGAECNIN…IKKPVNGSTH (98 aa)) folds into the Peptidase S1 domain. Catalysis depends on charge relay system residues His41 and Asp85. N-linked (GlcNAc...) asparagine glycosylation occurs at Asn94.

The protein belongs to the peptidase S1 family. Snake venom subfamily. Monomer. In terms of tissue distribution, expressed by the venom gland.

The protein localises to the secreted. Its activity is regulated as follows. Inhibited by PMSF. In terms of biological role, thrombin-like snake venom serine protease that preferentially cleaves the alpha-chain of fibrinogen (FGA). Induce platelet aggregation in the presence of exogenous fibrinogen. Possesses esterase and amidolytic activities. The protein is Thrombin-like enzyme cerastotin of Cerastes cerastes (Horned desert viper).